A 346-amino-acid polypeptide reads, in one-letter code: Extracellular protease (346 aa).

The N-terminal stretch at 1-21 (MMKATPIALLLAGVLASPLCA) is a signal peptide. His-296 provides a ligand contact to Zn(2+). The active site involves Glu-297. Residues His-300 and Asp-309 each contribute to the Zn(2+) site.

The protein belongs to the peptidase M35 family. The cofactor is Zn(2+).

Heat-labile protease. The chain is Extracellular protease from Aeromonas hydrophila.